Reading from the N-terminus, the 660-residue chain is Bifunctional polymyxin resistance protein ArnA (660 aa).

Residues 1–304 (MKAVIFAYHD…TLGLVAGARL (304 aa)) form a formyltransferase ArnAFT region. Catalysis depends on His104, which acts as the Proton donor; for formyltransferase activity. (6R)-10-formyltetrahydrofolate is bound by residues Arg114 and 136–140 (VKRAD). Residues 314–660 (RRIRVLILGV…RSVDVAERAS (347 aa)) are dehydrogenase ArnADH. NAD(+)-binding positions include Asp347 and 368 to 369 (DI). UDP-alpha-D-glucuronate-binding positions include Ala393, Tyr398, and 432-433 (TS). Glu434 acts as the Proton acceptor; for decarboxylase activity in catalysis. UDP-alpha-D-glucuronate-binding positions include Arg460, Asn492, 526–535 (KLIDGGQQKR), and Tyr613. Arg619 functions as the Proton donor; for decarboxylase activity in the catalytic mechanism.

The protein in the N-terminal section; belongs to the Fmt family. UDP-L-Ara4N formyltransferase subfamily. It in the C-terminal section; belongs to the NAD(P)-dependent epimerase/dehydratase family. UDP-glucuronic acid decarboxylase subfamily. In terms of assembly, homohexamer, formed by a dimer of trimers.

It carries out the reaction UDP-alpha-D-glucuronate + NAD(+) = UDP-beta-L-threo-pentopyranos-4-ulose + CO2 + NADH. The catalysed reaction is UDP-4-amino-4-deoxy-beta-L-arabinose + (6R)-10-formyltetrahydrofolate = UDP-4-deoxy-4-formamido-beta-L-arabinose + (6S)-5,6,7,8-tetrahydrofolate + H(+). Its pathway is nucleotide-sugar biosynthesis; UDP-4-deoxy-4-formamido-beta-L-arabinose biosynthesis; UDP-4-deoxy-4-formamido-beta-L-arabinose from UDP-alpha-D-glucuronate: step 1/3. It participates in nucleotide-sugar biosynthesis; UDP-4-deoxy-4-formamido-beta-L-arabinose biosynthesis; UDP-4-deoxy-4-formamido-beta-L-arabinose from UDP-alpha-D-glucuronate: step 3/3. It functions in the pathway bacterial outer membrane biogenesis; lipopolysaccharide biosynthesis. Bifunctional enzyme that catalyzes the oxidative decarboxylation of UDP-glucuronic acid (UDP-GlcUA) to UDP-4-keto-arabinose (UDP-Ara4O) and the addition of a formyl group to UDP-4-amino-4-deoxy-L-arabinose (UDP-L-Ara4N) to form UDP-L-4-formamido-arabinose (UDP-L-Ara4FN). The modified arabinose is attached to lipid A and is required for resistance to polymyxin and cationic antimicrobial peptides. The chain is Bifunctional polymyxin resistance protein ArnA from Salmonella paratyphi B (strain ATCC BAA-1250 / SPB7).